A 218-amino-acid polypeptide reads, in one-letter code: Cell division protein SepF (218 aa).

The disordered stretch occupies residues 24–115; that stretch reads EDVTASTDNV…IANRREQYQQ (92 aa). Polar residues predominate over residues 28-43; that stretch reads ASTDNVIPRSQQSVRA. Residues 47 to 63 show a composition bias toward basic and acidic residues; that stretch reads PKQEPRNNHVQQDHQAR.

The protein belongs to the SepF family. Homodimer. Interacts with FtsZ.

The protein resides in the cytoplasm. In terms of biological role, cell division protein that is part of the divisome complex and is recruited early to the Z-ring. Probably stimulates Z-ring formation, perhaps through the cross-linking of FtsZ protofilaments. Its function overlaps with FtsA. The chain is Cell division protein SepF from Streptococcus pyogenes serotype M4 (strain MGAS10750).